We begin with the raw amino-acid sequence, 184 residues long: Peptidyl-tRNA hydrolase (184 aa).

Tyr-13 serves as a coordination point for tRNA. Catalysis depends on His-18, which acts as the Proton acceptor. Residues Phe-59, Asn-61, and Asn-105 each coordinate tRNA.

It belongs to the PTH family. As to quaternary structure, monomer.

The protein resides in the cytoplasm. The catalysed reaction is an N-acyl-L-alpha-aminoacyl-tRNA + H2O = an N-acyl-L-amino acid + a tRNA + H(+). In terms of biological role, hydrolyzes ribosome-free peptidyl-tRNAs (with 1 or more amino acids incorporated), which drop off the ribosome during protein synthesis, or as a result of ribosome stalling. Its function is as follows. Catalyzes the release of premature peptidyl moieties from peptidyl-tRNA molecules trapped in stalled 50S ribosomal subunits, and thus maintains levels of free tRNAs and 50S ribosomes. This is Peptidyl-tRNA hydrolase from Sulfurimonas denitrificans (strain ATCC 33889 / DSM 1251) (Thiomicrospira denitrificans (strain ATCC 33889 / DSM 1251)).